The primary structure comprises 153 residues: Riboflavin synthase (153 aa).

The protein belongs to the DMRL synthase family.

The enzyme catalyses 2 6,7-dimethyl-8-(1-D-ribityl)lumazine + H(+) = 5-amino-6-(D-ribitylamino)uracil + riboflavin. It functions in the pathway cofactor biosynthesis; riboflavin biosynthesis; riboflavin from 2-hydroxy-3-oxobutyl phosphate and 5-amino-6-(D-ribitylamino)uracil: step 2/2. The chain is Riboflavin synthase (ribC) from Archaeoglobus fulgidus (strain ATCC 49558 / DSM 4304 / JCM 9628 / NBRC 100126 / VC-16).